The following is a 117-amino-acid chain: Large ribosomal subunit protein bL20 (117 aa).

Belongs to the bacterial ribosomal protein bL20 family.

In terms of biological role, binds directly to 23S ribosomal RNA and is necessary for the in vitro assembly process of the 50S ribosomal subunit. It is not involved in the protein synthesizing functions of that subunit. This chain is Large ribosomal subunit protein bL20, found in Maridesulfovibrio salexigens (strain ATCC 14822 / DSM 2638 / NCIMB 8403 / VKM B-1763) (Desulfovibrio salexigens).